Consider the following 444-residue polypeptide: MSNTILQNLPKGQKVGIAFSGGLDTSAALLWMRQKGAVPYAYTANLGQPDEDDYNAIPKKAMAYGAENARLIDCRAQLAHEGIAAIQCGAFHISTGGIPYFNTTPLGRAVTGTMLVAAMKEDDVNIWGDGSTFKGNDIERFYRYGLLTNPNLKIYKPWLDVQFIEELGGRLEMSQFLIENGFDYKMSVEKAYSTDSNMLGATHEAKDLEQLSTGMKIVKPIMGVAFWDEKVEIKPETVTVTFEDGVPVALNGKHFDNAVDLILEANRIGGRHGLGMSDQIENRIIEAKSRGIYEAPGMALLHIAYERLVTGIHNEDTIEQYRINGIRLGRLLYQGRWFDPQALMLRETAQRWVAKAITGTVTLELRRGNDFTILNTESPNLTYEAERLSMEKVEDAPFDPIDRIGQLTMRNLDVSDTRGKLGIYAQTGLLSAIKDSVLPQLGKK.

ATP is bound by residues 18–26 (AFSGGLDTS) and alanine 44. Residue tyrosine 100 participates in L-citrulline binding. 2 residues coordinate ATP: glycine 130 and threonine 132. 3 residues coordinate L-aspartate: threonine 132, asparagine 136, and aspartate 137. L-citrulline is bound at residue asparagine 136. An ATP-binding site is contributed by aspartate 137. Residues arginine 140 and serine 193 each coordinate L-citrulline. Aspartate 195 provides a ligand contact to ATP. The L-citrulline site is built by threonine 202, glutamate 204, and glutamate 281.

It belongs to the argininosuccinate synthase family. Type 2 subfamily. As to quaternary structure, homotetramer.

Its subcellular location is the cytoplasm. The catalysed reaction is L-citrulline + L-aspartate + ATP = 2-(N(omega)-L-arginino)succinate + AMP + diphosphate + H(+). It participates in amino-acid biosynthesis; L-arginine biosynthesis; L-arginine from L-ornithine and carbamoyl phosphate: step 2/3. This Haemophilus influenzae (strain PittGG) protein is Argininosuccinate synthase.